The chain runs to 492 residues: Trypanothione reductase (492 aa).

An FAD-binding site is contributed by 36–52 (DVQMVHGPPFFSALGGT). A disulfide bridge connects residues Cys-53 and Cys-58. The active-site Proton acceptor is His-461.

Belongs to the class-I pyridine nucleotide-disulfide oxidoreductase family. In terms of assembly, homodimer. FAD is required as a cofactor.

The protein localises to the cytoplasm. The catalysed reaction is trypanothione + NADP(+) = trypanothione disulfide + NADPH + H(+). Its function is as follows. Trypanothione is the parasite analog of glutathione; this enzyme is the equivalent of glutathione reductase. The polypeptide is Trypanothione reductase (TPR) (Trypanosoma cruzi).